The primary structure comprises 687 residues: Fatty acid oxidation complex subunit alpha (687 aa).

An enoyl-CoA hydratase region spans residues 1-191; it reads MKNTSAFAWT…KLGVVDASVP (191 aa). The segment at 307-687 is 3-hydroxyacyl-CoA dehydrogenase; it reads KSIDYVGVLG…ADKYGDRFIE (381 aa).

The protein in the N-terminal section; belongs to the enoyl-CoA hydratase/isomerase family. In the central section; belongs to the 3-hydroxyacyl-CoA dehydrogenase family. Heterotetramer of two alpha chains (FadJ) and two beta chains (FadI).

The protein localises to the cytoplasm. It catalyses the reaction a (3S)-3-hydroxyacyl-CoA = a (2E)-enoyl-CoA + H2O. The enzyme catalyses a 4-saturated-(3S)-3-hydroxyacyl-CoA = a (3E)-enoyl-CoA + H2O. It carries out the reaction a (3S)-3-hydroxyacyl-CoA + NAD(+) = a 3-oxoacyl-CoA + NADH + H(+). The catalysed reaction is (3S)-3-hydroxybutanoyl-CoA = (3R)-3-hydroxybutanoyl-CoA. It participates in lipid metabolism; fatty acid beta-oxidation. In terms of biological role, catalyzes the formation of a hydroxyacyl-CoA by addition of water on enoyl-CoA. Also exhibits 3-hydroxyacyl-CoA epimerase and 3-hydroxyacyl-CoA dehydrogenase activities. This Aliivibrio fischeri (strain ATCC 700601 / ES114) (Vibrio fischeri) protein is Fatty acid oxidation complex subunit alpha.